Reading from the N-terminus, the 28-residue chain is fur leader peptide (28 aa).

Its function is as follows. Cotranscribed with fur, it is essential for fur translation. The fur ribosomal binding site (RBS) is occluded by the 5'-mRNA secondary structure, which is opened by uof translation. The chain is fur leader peptide (uof) from Escherichia coli (strain K12).